Consider the following 410-residue polypeptide: Aspartate aminotransferase (410 aa).

Residues Gly-47, Trp-135, and Asn-185 each contribute to the L-aspartate site. Lys-249 bears the N6-(pyridoxal phosphate)lysine mark. Residue Arg-385 coordinates L-aspartate.

This sequence belongs to the class-I pyridoxal-phosphate-dependent aminotransferase family. As to quaternary structure, homodimer. It depends on pyridoxal 5'-phosphate as a cofactor.

The protein resides in the cytoplasm. It carries out the reaction L-aspartate + 2-oxoglutarate = oxaloacetate + L-glutamate. Catalyzes the reversible conversion of aspartate and 2-oxoglutarate to glutamate and oxaloacetate. This Rhizobium meliloti (Ensifer meliloti) protein is Aspartate aminotransferase.